The primary structure comprises 1170 residues: Probable mRNA-capping enzyme (1170 aa).

Lys-292 acts as the N6-GMP-lysine intermediate in catalysis. In terms of domain architecture, mRNA cap 0 methyltransferase spans 684–1007 (SNAAGMRAFN…LNRYYVFRKT (324 aa)). Position 693-694 (693-694 (NN)) interacts with mRNA. S-adenosyl-L-methionine contacts are provided by residues Lys-697, Gly-715, Asp-737, and 813 to 815 (QFT).

In the N-terminal section; belongs to the dsDNA virus mRNA guanylyltransferase family. This sequence in the C-terminal section; belongs to the class I-like SAM-binding methyltransferase superfamily. mRNA cap 0 methyltransferase family.

It localises to the virion. It carries out the reaction a 5'-end triphospho-ribonucleoside in mRNA + H2O = a 5'-end diphospho-ribonucleoside in mRNA + phosphate + H(+). The catalysed reaction is a 5'-end diphospho-ribonucleoside in mRNA + GTP + H(+) = a 5'-end (5'-triphosphoguanosine)-ribonucleoside in mRNA + diphosphate. It catalyses the reaction a 5'-end (5'-triphosphoguanosine)-ribonucleoside in mRNA + S-adenosyl-L-methionine = a 5'-end (N(7)-methyl 5'-triphosphoguanosine)-ribonucleoside in mRNA + S-adenosyl-L-homocysteine. It functions in the pathway mRNA processing; mRNA capping. Functionally, responsible for methylating the 5'-cap structure of mRNAs. The polypeptide is Probable mRNA-capping enzyme (Acanthamoeba polyphaga mimivirus (APMV)).